A 124-amino-acid chain; its full sequence is Small ribosomal subunit protein uS12 (124 aa).

The tract at residues 1–30 is disordered; sequence MPTIQQLVRKGRTPKVTKTKAPALKANPQQ. A compositionally biased stretch (basic residues) spans 9–18; the sequence is RKGRTPKVTK.

This sequence belongs to the universal ribosomal protein uS12 family. As to quaternary structure, part of the 30S ribosomal subunit. Contacts proteins S8 and S17. May interact with IF1 in the 30S initiation complex.

Functionally, with S4 and S5 plays an important role in translational accuracy. In terms of biological role, interacts with and stabilizes bases of the 16S rRNA that are involved in tRNA selection in the A site and with the mRNA backbone. Located at the interface of the 30S and 50S subunits, it traverses the body of the 30S subunit contacting proteins on the other side and probably holding the rRNA structure together. The combined cluster of proteins S8, S12 and S17 appears to hold together the shoulder and platform of the 30S subunit. The protein is Small ribosomal subunit protein uS12 of Leifsonia xyli subsp. xyli (strain CTCB07).